The chain runs to 267 residues: MNDINPAFVMPDVQSSVDTRQIVIQRVGVKGVRYPLTLKTPAGAVGTVGTFNMDVRLPADQKGTHMSRFVALLEENRAPLDLAAFRALVDDMLVRLEADAGRIEVSFPYFITKTAPVSGVQSLLDYEVTLVAEARDGQTRMFMTALVPVTSLCPCSKKISQYGAHNQRSHITMRVELAGDLDVEALVRMAEEEASCELWGLLKRPDEKFVTERAYENPKFVEDLVRDIAMRLNADDRIVAYTLEAENFESIHNHSAYAVIEHDKRHQ.

Belongs to the GTP cyclohydrolase IV family.

The catalysed reaction is GTP + H2O = 7,8-dihydroneopterin 3'-triphosphate + formate + H(+). The protein operates within cofactor biosynthesis; 7,8-dihydroneopterin triphosphate biosynthesis; 7,8-dihydroneopterin triphosphate from GTP: step 1/1. Functionally, converts GTP to 7,8-dihydroneopterin triphosphate. The chain is GTP cyclohydrolase FolE2 2 from Cupriavidus metallidurans (strain ATCC 43123 / DSM 2839 / NBRC 102507 / CH34) (Ralstonia metallidurans).